Consider the following 252-residue polypeptide: Triosephosphate isomerase (252 aa).

10-12 (NWK) contributes to the substrate binding site. His96 functions as the Electrophile in the catalytic mechanism. The active-site Proton acceptor is the Glu168. Substrate-binding positions include Gly174, Ser214, and 235–236 (GG).

It belongs to the triosephosphate isomerase family. As to quaternary structure, homodimer.

It localises to the cytoplasm. It catalyses the reaction D-glyceraldehyde 3-phosphate = dihydroxyacetone phosphate. It participates in carbohydrate biosynthesis; gluconeogenesis. Its pathway is carbohydrate degradation; glycolysis; D-glyceraldehyde 3-phosphate from glycerone phosphate: step 1/1. Seems to be capable of enhancing bacteriocin synthesis. Its function is as follows. Involved in the gluconeogenesis. Catalyzes stereospecifically the conversion of dihydroxyacetone phosphate (DHAP) to D-glyceraldehyde-3-phosphate (G3P). This is Triosephosphate isomerase from Lactobacillus delbrueckii subsp. lactis.